Consider the following 351-residue polypeptide: Ion-translocating oxidoreductase complex subunit D (351 aa).

The next 4 membrane-spanning stretches (helical) occupy residues Ile18–Gly38, Gly40–Leu60, Leu87–Ala107, and Pro121–Leu141. An FMN phosphoryl threonine modification is found at Thr185. A run of 5 helical transmembrane segments spans residues Val211–Leu231, Ile241–Pro261, Phe264–Ala284, Leu298–Pro318, and Gly320–Gln340.

The protein belongs to the NqrB/RnfD family. As to quaternary structure, the complex is composed of six subunits: RnfA, RnfB, RnfC, RnfD, RnfE and RnfG. The cofactor is FMN.

It is found in the cell inner membrane. In terms of biological role, part of a membrane-bound complex that couples electron transfer with translocation of ions across the membrane. The sequence is that of Ion-translocating oxidoreductase complex subunit D from Yersinia pseudotuberculosis serotype I (strain IP32953).